Here is a 591-residue protein sequence, read N- to C-terminus: Glutathione S-transferase T2 (591 aa).

One can recognise a GST N-terminal domain in the interval methionine 1 to valine 82. Glutathione contacts are provided by residues serine 11–glutamine 12, glutamine 40–leucine 41, lysine 53–valine 54, and glutamate 66–serine 67. The region spanning aspartate 89–phenylalanine 226 is the GST C-terminal domain. Positions glutamine 229–lysine 272 are disordered. Polar residues predominate over residues lysine 243–aspartate 262. Residues aspartate 265–asparagine 338 form the Myb-like domain.

It belongs to the GST superfamily. Theta family.

It is found in the peroxisome. The enzyme catalyses RX + glutathione = an S-substituted glutathione + a halide anion + H(+). In terms of biological role, may be involved in the conjugation of reduced glutathione to a wide number of exogenous and endogenous hydrophobic electrophiles and have a detoxification role against certain herbicides. This is Glutathione S-transferase T2 (GSTT2) from Arabidopsis thaliana (Mouse-ear cress).